The primary structure comprises 507 residues: Sterol 14-alpha demethylase CYP51A (507 aa).

Residues 7-29 (YPLWVLVALFAVIIANLLYQQLP) traverse the membrane as a helical segment. Tyrosine 105 is a binding site for lanosterol. Heme is bound at residue cysteine 449.

The protein belongs to the cytochrome P450 family. Heme serves as cofactor.

The protein localises to the endoplasmic reticulum membrane. It catalyses the reaction a 14alpha-methyl steroid + 3 reduced [NADPH--hemoprotein reductase] + 3 O2 = a Delta(14) steroid + formate + 3 oxidized [NADPH--hemoprotein reductase] + 4 H2O + 4 H(+). The enzyme catalyses a 14alpha-methyl steroid + reduced [NADPH--hemoprotein reductase] + O2 = a 14alpha-hydroxymethyl steroid + oxidized [NADPH--hemoprotein reductase] + H2O + H(+). The catalysed reaction is a 14alpha-hydroxymethyl steroid + reduced [NADPH--hemoprotein reductase] + O2 = a 14alpha-formyl steroid + oxidized [NADPH--hemoprotein reductase] + 2 H2O + H(+). It carries out the reaction a 14alpha-formyl steroid + reduced [NADPH--hemoprotein reductase] + O2 = a Delta(14) steroid + formate + oxidized [NADPH--hemoprotein reductase] + H2O + 2 H(+). It catalyses the reaction lanosterol + 3 reduced [NADPH--hemoprotein reductase] + 3 O2 = 4,4-dimethyl-5alpha-cholesta-8,14,24-trien-3beta-ol + formate + 3 oxidized [NADPH--hemoprotein reductase] + 4 H2O + 4 H(+). The enzyme catalyses lanosterol + reduced [NADPH--hemoprotein reductase] + O2 = 32-hydroxylanosterol + oxidized [NADPH--hemoprotein reductase] + H2O + H(+). The catalysed reaction is 32-hydroxylanosterol + reduced [NADPH--hemoprotein reductase] + O2 = 32-oxolanosterol + oxidized [NADPH--hemoprotein reductase] + 2 H2O + H(+). It carries out the reaction 32-oxolanosterol + reduced [NADPH--hemoprotein reductase] + O2 = 4,4-dimethyl-5alpha-cholesta-8,14,24-trien-3beta-ol + formate + oxidized [NADPH--hemoprotein reductase] + H2O + 2 H(+). It catalyses the reaction eburicol + 3 reduced [NADPH--hemoprotein reductase] + 3 O2 = 14-demethyleburicol + formate + 3 oxidized [NADPH--hemoprotein reductase] + 4 H2O + 4 H(+). The enzyme catalyses eburicol + reduced [NADPH--hemoprotein reductase] + O2 = 32-hydroxyeburicol + oxidized [NADPH--hemoprotein reductase] + H2O + H(+). The catalysed reaction is 32-hydroxyeburicol + reduced [NADPH--hemoprotein reductase] + O2 = 32-oxoeburicol + oxidized [NADPH--hemoprotein reductase] + 2 H2O + H(+). It carries out the reaction 32-oxoeburicol + reduced [NADPH--hemoprotein reductase] + O2 = 14-demethyleburicol + formate + oxidized [NADPH--hemoprotein reductase] + H2O + 2 H(+). It participates in steroid metabolism; ergosterol biosynthesis. Functionally, together with cyp51B and cyp51C, encodes the sterol 14alpha-demethylase that plays a critical role in the third module of ergosterol biosynthesis pathway, being ergosterol the major sterol component in fungal membranes that participates in a variety of functions. CYP51A encodes the sterol 14-alpha-demethylase induced on ergosterol depletion and is responsible for the intrinsic variation in azole sensitivity. The third module or late pathway involves the ergosterol synthesis itself through consecutive reactions that mainly occur in the endoplasmic reticulum (ER) membrane. In filamentous fungi, during the initial step of this module, lanosterol (lanosta-8,24-dien-3beta-ol) can be metabolized to eburicol. Sterol 14alpha-demethylase catalyzes the three-step oxidative removal of the 14alpha-methyl group (C-32) of both these sterols in the form of formate, and converts eburicol and lanosterol to 14-demethyleburicol (4,4,24-trimethylergosta-8,14,24(28)-trienol) and 4,4-dimethyl-5alpha-cholesta-8,14,24-trien-3beta-ol, respectively, which are further metabolized by other enzymes in the pathway to ergosterol. Can also use substrates not intrinsic to fungi, such as 24,25-dihydrolanosterol (DHL), producing 4,4'-dimethyl-8,14-cholestadien-3-beta-ol, but at lower rates than the endogenous substrates. The protein is Sterol 14-alpha demethylase CYP51A of Gibberella zeae (strain ATCC MYA-4620 / CBS 123657 / FGSC 9075 / NRRL 31084 / PH-1) (Wheat head blight fungus).